We begin with the raw amino-acid sequence, 300 residues long: Epimerase family protein SAR0825 (300 aa).

The protein belongs to the NAD(P)-dependent epimerase/dehydratase family. SDR39U1 subfamily.

This is Epimerase family protein SAR0825 from Staphylococcus aureus (strain MRSA252).